The primary structure comprises 526 residues: DNA polymerase epsilon subunit B (526 aa).

Belongs to the DNA polymerase epsilon subunit B family. As to quaternary structure, subunit of the DNA polymerase II. Interacts with POL2A (via C-terminus).

The protein resides in the nucleus. As accessory component of DNA polymerase II participates in chromosomal DNA replication. Required for the timing and determination of cell fate during plant embryogenesis and root pole development, by promoting cell cycle and cell type patterning. Necessary for proper shoot (SAM) and root apical meristem (RAM) functions. Is essential to promote the first divisions of the zygote. The chain is DNA polymerase epsilon subunit B from Arabidopsis thaliana (Mouse-ear cress).